The primary structure comprises 485 residues: Aldehyde dehydrogenase family 3 member A2 (485 aa).

Residues M1–K463 are Cytoplasmic-facing. G185–G190 provides a ligand contact to NAD(+). Catalysis depends on residues E207 and C241. S293 carries the phosphoserine modification. Residues L464–Y484 traverse the membrane as a helical segment. The Prevents secretion from ER motif lies at N481–Y484.

This sequence belongs to the aldehyde dehydrogenase family. Homodimer.

The protein resides in the microsome membrane. It is found in the endoplasmic reticulum membrane. It carries out the reaction an aldehyde + NAD(+) + H2O = a carboxylate + NADH + 2 H(+). The catalysed reaction is a fatty aldehyde + NAD(+) + H2O = a fatty acid + NADH + 2 H(+). It catalyses the reaction (2E)-hexadecenal + NAD(+) + H2O = (E)-hexadec-2-enoate + NADH + 2 H(+). The enzyme catalyses hexadecanoate + NADH + 2 H(+) = hexadecanal + NAD(+) + H2O. It carries out the reaction 22-oxodocosanoate + NAD(+) + H2O = docosanedioate + NADH + 2 H(+). The catalysed reaction is 2,6,10,14-tetramethylpentadecanal + NAD(+) + H2O = 2,6,10,14-tetramethylpentadecanoate + NADH + 2 H(+). It catalyses the reaction octadecanal + NAD(+) + H2O = octadecanoate + NADH + 2 H(+). The enzyme catalyses dodecanoate + NADH + 2 H(+) = dodecanal + NAD(+) + H2O. It carries out the reaction decanal + NAD(+) + H2O = decanoate + NADH + 2 H(+). The catalysed reaction is tetradecanal + NAD(+) + H2O = tetradecanoate + NADH + 2 H(+). It catalyses the reaction octanal + NAD(+) + H2O = octanoate + NADH + 2 H(+). The enzyme catalyses heptanal + NAD(+) + H2O = heptanoate + NADH + 2 H(+). It carries out the reaction (2E,6E)-farnesal + NAD(+) + H2O = (2E,6E)-farnesoate + NADH + 2 H(+). Functionally, catalyzes the oxidation of medium and long-chain aliphatic aldehydes to fatty acids. Active on a variety of saturated and unsaturated aliphatic aldehydes between 6 and 24 carbons in length. Responsible for conversion of the sphingosine 1-phosphate (S1P) degradation product hexadecenal to hexadecenoic acid. This chain is Aldehyde dehydrogenase family 3 member A2 (ALDH3A2), found in Macaca fascicularis (Crab-eating macaque).